A 237-amino-acid chain; its full sequence is Concanavalin-Br (237 aa).

Mn(2+) is bound by residues glutamate 8 and aspartate 10. Residues aspartate 10, tyrosine 12, asparagine 14, and aspartate 19 each coordinate Ca(2+). Tyrosine 12 serves as a coordination point for a carbohydrate. Residues aspartate 19, histidine 24, and serine 34 each contribute to the Mn(2+) site. 99-100 (LY) lines the a carbohydrate pocket. A Ca(2+)-binding site is contributed by aspartate 208. Arginine 228 serves as a coordination point for a carbohydrate.

Belongs to the leguminous lectin family. As to quaternary structure, homotetramer.

Functionally, glucose/D-mannose specific lectin. Has anti-inflammatory activity in rats. Induces histamine release in mast cells from hamster and rat. Induces lymphocyte proliferation and IFNG production. Shows toxicity against the aquatic snail B.glabrata at concentrations higher than 20 ug/ml. The sequence is that of Concanavalin-Br from Canavalia brasiliensis (Brazilian jack bean).